The sequence spans 147 residues: Hemoglobin subunit beta (147 aa).

Valine 2 carries the post-translational modification N-acetylvaline. Residues 3 to 147 (HLTPEEKSAV…VANALAHKYH (145 aa)) enclose the Globin domain. Threonine 13 is modified (phosphothreonine). Position 45 is a phosphoserine (serine 45). Lysine 60 carries the N6-acetyllysine modification. Residue histidine 64 coordinates heme b. An N6-acetyllysine modification is found at lysine 83. Histidine 93 contributes to the heme b binding site. Position 94 is an S-nitrosocysteine (cysteine 94). Lysine 145 is modified (N6-acetyllysine).

It belongs to the globin family. In terms of assembly, heterotetramer of two alpha chains and two beta chains in adult hemoglobin A (HbA). In terms of tissue distribution, red blood cells.

Its function is as follows. Involved in oxygen transport from the lung to the various peripheral tissues. The polypeptide is Hemoglobin subunit beta (HBB) (Pan paniscus (Pygmy chimpanzee)).